We begin with the raw amino-acid sequence, 648 residues long: MSAADPSQGNKSWTVADSAALYGLDRWGEPYFTANANGHVQVKPRGDQGSCLDLVELVEELKSRNLNLPLLIRFDDILEDRLEKLHSAFEQAISKYGYAGRYQGVFPVKCNQQRHVVEQLVESGRHWHFGLEAGSKAELLIALSLVNDPEALLICNGYKDQRYIETAILARRLGRQPVVVIEQPDEVERIIRSSQELGAAPFIGVRAKLTTRSTGHWSSSVGEKAKFGLSFPDLLSTVEALRQADLLSDLRLLHFHIGSQINDIAVLKDAIQEAGQIYVELTKLGAPMGYLDVGGGLGVDYDGSRSASAASTNYSLQNYANDVVATVRECCKPHGITLPILVSESGRAIASHFSILVFDVLGTGTVPGAVPNQTGEEPLTIHNLRETLAGVMATQKGAASEISRLQEAWNDAVKFKDDALAAFRLGYISLTERALAEQLTWACAEAIMGQLPCHETIPDDLQGLRAVLAGTYYANLSIFRSAPDTWAIEQLFPLMPIHRLKEEPTQLGHFADLTCDSDGKLDRFIGNGQTKTLLELHNLRQNEAYMIGMFLAGAYQEVMGNLHNLFGSTNAVHIRMTTGGGYQIDHVVRGNTNSEVLEAMEHNPEILLERLRLASELAIQRGELKINDVRRLMDHLETSLRQTTYLQG.

Residue K109 is modified to N6-(pyridoxal phosphate)lysine. A substrate-binding site is contributed by 291 to 301 (LDVGGGLGVDY).

It belongs to the Orn/Lys/Arg decarboxylase class-II family. SpeA subfamily. Requires Mg(2+) as cofactor. Pyridoxal 5'-phosphate serves as cofactor.

The enzyme catalyses L-arginine + H(+) = agmatine + CO2. It participates in amine and polyamine biosynthesis; agmatine biosynthesis; agmatine from L-arginine: step 1/1. Functionally, catalyzes the biosynthesis of agmatine from arginine. This is Biosynthetic arginine decarboxylase from Prochlorococcus marinus (strain MIT 9303).